The sequence spans 499 residues: Probable cytosol aminopeptidase (499 aa).

Positions 271 and 276 each coordinate Mn(2+). Lys283 is an active-site residue. Mn(2+)-binding residues include Asp294, Asp353, and Glu355. The active site involves Arg357.

The protein belongs to the peptidase M17 family. It depends on Mn(2+) as a cofactor.

The protein localises to the cytoplasm. The catalysed reaction is Release of an N-terminal amino acid, Xaa-|-Yaa-, in which Xaa is preferably Leu, but may be other amino acids including Pro although not Arg or Lys, and Yaa may be Pro. Amino acid amides and methyl esters are also readily hydrolyzed, but rates on arylamides are exceedingly low.. The enzyme catalyses Release of an N-terminal amino acid, preferentially leucine, but not glutamic or aspartic acids.. In terms of biological role, presumably involved in the processing and regular turnover of intracellular proteins. Catalyzes the removal of unsubstituted N-terminal amino acids from various peptides. This is Probable cytosol aminopeptidase from Bordetella parapertussis (strain 12822 / ATCC BAA-587 / NCTC 13253).